The sequence spans 406 residues: Cholinephosphotransferase 1 (406 aa).

At A2 the chain carries N-acetylalanine. Residues 2–62 (AAGAGAGSAP…LLQWIPLWMA (61 aa)) are Cytoplasmic-facing. The helical transmembrane segment at 63–83 (PNSITLLGLAVNVVTTLVLIS) threads the bilayer. N64 is a binding site for CDP-choline. Over 84–93 (YCPTATEEAP) the chain is Lumenal. The helical transmembrane segment at 94–118 (YWTYLLCALGLFIYQSLDAIDGKQA) threads the bilayer. Residues D111 and D114 each contribute to the Mg(2+) site. R119 provides a ligand contact to CDP-choline. At 119–125 (RRTNSCS) the chain is on the cytoplasmic side. The chain crosses the membrane as a helical span at residues 126–150 (PLGELFDHGCDSLSTVFMAVGASIA). D132 is a binding site for Mg(2+). H133 functions as the Proton acceptor in the catalytic mechanism. Residue D136 coordinates Mg(2+). The Lumenal segment spans residues 151–160 (ARLGTYPDWF). A helical transmembrane segment spans residues 161–179 (FFCSFIGMFVFYCAHWQTY). The Cytoplasmic segment spans residues 180 to 190 (VSGMLRFGKVD). A helical transmembrane segment spans residues 191–207 (VTEIQIALVIVFVLSAF). Over 208–222 (GGATMWDYTIPILEI) the chain is Lumenal. Residues 223 to 248 (KLKILPVLGFLGGVIFSCSNYFHVIL) traverse the membrane as a helical segment. Over 249 to 265 (HGGVGKNGSTIAGTSVL) the chain is Cytoplasmic. A helical transmembrane segment spans residues 266 to 281 (SPGLHIGLIIILAIMI). Topologically, residues 282–293 (YKKSATDVFEKH) are lumenal. Residues 294–316 (PCLYILMFGCVFAKVSQKLVVAH) traverse the membrane as a helical segment. The Cytoplasmic segment spans residues 317–329 (MTKSELYLQDTVF). The helical transmembrane segment at 330-339 (LGPGLLFLDQ) threads the bilayer. The Lumenal segment spans residues 340-346 (YFNNFID). The chain crosses the membrane as a helical span at residues 347–376 (EYVVLWMAMVISSFDMVIYFSALCLQISRH). Topologically, residues 377–406 (LHLNIFKTACHQAPEQVQVLSSKSHQNNMD) are cytoplasmic.

This sequence belongs to the CDP-alcohol phosphatidyltransferase class-I family. The cofactor is Mg(2+). Mn(2+) is required as a cofactor. In terms of tissue distribution, highly expressed in testis, colon, small intestine, heart, prostate and spleen. Also detected in kidney, skeletal muscle, pancreas, leukocytes, ovary and thymus. Weakly expressed in the brain, placenta and lung. Overexpressed in cancerous breast epithelial cell lines.

It localises to the golgi apparatus membrane. The enzyme catalyses CDP-choline + a 1,2-diacyl-sn-glycerol = a 1,2-diacyl-sn-glycero-3-phosphocholine + CMP + H(+). The catalysed reaction is 1-octadecanoyl-2-(5Z,8Z,11Z,14Z-eicosatetraenoyl)-sn-glycerol + CDP-choline = 1-octadecanoyl-2-(5Z,8Z,11Z,14Z-eicosatetraenoyl)-sn-glycero-3-phosphocholine + CMP + H(+). It catalyses the reaction 1-hexadecanoyl-2-(9Z-octadecenoyl)-sn-glycerol + CDP-choline = 1-hexadecanoyl-2-(9Z-octadecenoyl)-sn-glycero-3-phosphocholine + CMP + H(+). It carries out the reaction 1-hexadecanoyl-2-(4Z,7Z,10Z,13Z,16Z,19Z-docosahexaenoyl)-sn-glycerol + CDP-choline = 1-hexadecanoyl-2-(4Z,7Z,10Z,13Z,16Z,19Z-docosahexaenoyl)-sn-glycero-3-phosphocholine + CMP + H(+). The enzyme catalyses 1,2-dioctanoyl-sn-glycerol + CDP-choline = 1,2-dioctanoyl-sn-glycero-3-phosphocholine + CMP + H(+). It functions in the pathway phospholipid metabolism; phosphatidylcholine biosynthesis; phosphatidylcholine from phosphocholine: step 2/2. Catalyzes the final step of de novo phosphatidylcholine (PC) synthesis, i.e. the transfer of choline phosphate from CDP-choline to the free hydroxyl of a diacylglycerol (DAG), producing a PC. It thereby plays a central role in the formation and maintenance of vesicular membranes. The chain is Cholinephosphotransferase 1 from Homo sapiens (Human).